The chain runs to 65 residues: Large ribosomal subunit protein bL35 (65 aa).

Basic residues predominate over residues 1–16; it reads MPKMKTHRASAKRFKK. The interval 1–24 is disordered; that stretch reads MPKMKTHRASAKRFKKTANGGLKS.

The protein belongs to the bacterial ribosomal protein bL35 family.

This Leuconostoc mesenteroides subsp. mesenteroides (strain ATCC 8293 / DSM 20343 / BCRC 11652 / CCM 1803 / JCM 6124 / NCDO 523 / NBRC 100496 / NCIMB 8023 / NCTC 12954 / NRRL B-1118 / 37Y) protein is Large ribosomal subunit protein bL35.